The primary structure comprises 175 residues: Protein SELF-PRUNING (175 aa).

This sequence belongs to the phosphatidylethanolamine-binding protein family.

The protein resides in the cytoplasm. In terms of biological role, not known. In plants homozygous for the recessive allele of the SP gene, sympodial segments develop progressively fewer nodes until the shoot is terminated by two consecutive. inflorescences. The chain is Protein SELF-PRUNING (SP) from Solanum lycopersicum (Tomato).